A 180-amino-acid polypeptide reads, in one-letter code: Peptide deformylase (180 aa).

Cysteine 96 and histidine 138 together coordinate Fe cation. Glutamate 139 is an active-site residue. Histidine 142 lines the Fe cation pocket.

This sequence belongs to the polypeptide deformylase family. Requires Fe(2+) as cofactor.

It carries out the reaction N-terminal N-formyl-L-methionyl-[peptide] + H2O = N-terminal L-methionyl-[peptide] + formate. Functionally, removes the formyl group from the N-terminal Met of newly synthesized proteins. Requires at least a dipeptide for an efficient rate of reaction. N-terminal L-methionine is a prerequisite for activity but the enzyme has broad specificity at other positions. The protein is Peptide deformylase of Rhodopseudomonas palustris (strain BisA53).